The following is a 187-amino-acid chain: Elongation factor P (187 aa).

Belongs to the elongation factor P family.

It localises to the cytoplasm. The protein operates within protein biosynthesis; polypeptide chain elongation. In terms of biological role, involved in peptide bond synthesis. Stimulates efficient translation and peptide-bond synthesis on native or reconstituted 70S ribosomes in vitro. Probably functions indirectly by altering the affinity of the ribosome for aminoacyl-tRNA, thus increasing their reactivity as acceptors for peptidyl transferase. This Nocardioides sp. (strain ATCC BAA-499 / JS614) protein is Elongation factor P.